The primary structure comprises 438 residues: Transmembrane protease serine 11F (438 aa).

The Cytoplasmic segment spans residues M1–L32. A helical; Signal-anchor for type II membrane protein transmembrane segment spans residues F33–V53. At E54–M438 the chain is on the extracellular side. The 119-residue stretch at K57–S175 folds into the SEA domain. Positions I206 to G437 constitute a Peptidase S1 domain. C233 and C249 are oxidised to a cystine. Active-site charge relay system residues include H248 and D293. 2 disulfides stabilise this stretch: C358–C374 and C385–C413. S389 acts as the Charge relay system in catalysis.

This sequence belongs to the peptidase S1 family.

It is found in the membrane. Its function is as follows. Probable serine protease. The protein is Transmembrane protease serine 11F (TMPRSS11F) of Homo sapiens (Human).